Reading from the N-terminus, the 710-residue chain is Assimilatory nitrate reductase catalytic subunit (710 aa).

The region spanning Glu-19–Ser-77 is the 4Fe-4S Mo/W bis-MGD-type domain. Cys-26, Cys-29, Cys-33, and Cys-63 together coordinate [4Fe-4S] cluster.

Belongs to the prokaryotic molybdopterin-containing oxidoreductase family. Requires [4Fe-4S] cluster as cofactor. It depends on Mo-bis(molybdopterin guanine dinucleotide) as a cofactor.

The protein operates within nitrogen metabolism; nitrate reduction (denitrification); dinitrogen from nitrate: step 1/4. In terms of biological role, nitrate reductase is a key enzyme involved in the first step of nitrate assimilation in plants, fungi and bacteria. The chain is Assimilatory nitrate reductase catalytic subunit (nasC) from Bacillus subtilis (strain 168).